We begin with the raw amino-acid sequence, 207 residues long: Fibroblast growth factor 18 (207 aa).

The N-terminal stretch at 1-27 (MYSAPSACTCLCLHFLLLCFQVQVLAA) is a signal peptide. An N-linked (GlcNAc...) asparagine glycan is attached at N39. C109 and C127 form a disulfide bridge. An N-linked (GlcNAc...) asparagine glycan is attached at N137. The disordered stretch occupies residues 157 to 183 (GRPRKGPKTRENQQDVHFMKRYPKGQT). Over residues 164-174 (KTRENQQDVHF) the composition is skewed to basic and acidic residues.

It belongs to the heparin-binding growth factors family. As to quaternary structure, interacts with FGFR3 and FGFR4. In terms of tissue distribution, mainly expressed in the lung. Not detected in brain, heart, liver, kidney and small intestine.

It localises to the secreted. In terms of biological role, plays an important role in the regulation of cell proliferation, cell differentiation and cell migration. Required for normal ossification and bone development. Stimulates hepatic and intestinal proliferation. This is Fibroblast growth factor 18 (Fgf18) from Rattus norvegicus (Rat).